A 504-amino-acid polypeptide reads, in one-letter code: Amidophosphoribosyltransferase (504 aa).

The active-site Nucleophile is C2. The 234-residue stretch at 2–235 folds into the Glutamine amidotransferase type-2 domain; it reads CGIVGIVSQS…PGEAIYVTFE (234 aa). The Mg(2+) site is built by T305, D367, and D368.

This sequence in the C-terminal section; belongs to the purine/pyrimidine phosphoribosyltransferase family. Mg(2+) serves as cofactor.

It catalyses the reaction 5-phospho-beta-D-ribosylamine + L-glutamate + diphosphate = 5-phospho-alpha-D-ribose 1-diphosphate + L-glutamine + H2O. It participates in purine metabolism; IMP biosynthesis via de novo pathway; N(1)-(5-phospho-D-ribosyl)glycinamide from 5-phospho-alpha-D-ribose 1-diphosphate: step 1/2. Its function is as follows. Catalyzes the formation of phosphoribosylamine from phosphoribosylpyrophosphate (PRPP) and glutamine. The sequence is that of Amidophosphoribosyltransferase from Pasteurella multocida (strain Pm70).